Reading from the N-terminus, the 274-residue chain is NH(3)-dependent NAD(+) synthetase (274 aa).

46–53 contributes to the ATP binding site; that stretch reads GISGGQDS. D52 serves as a coordination point for Mg(2+). Residue R140 coordinates deamido-NAD(+). An ATP-binding site is contributed by T160. E165 contacts Mg(2+). Residues K173 and D180 each contribute to the deamido-NAD(+) site. ATP contacts are provided by K189 and T211. 260–261 lines the deamido-NAD(+) pocket; that stretch reads HK.

This sequence belongs to the NAD synthetase family. As to quaternary structure, homodimer.

The catalysed reaction is deamido-NAD(+) + NH4(+) + ATP = AMP + diphosphate + NAD(+) + H(+). It functions in the pathway cofactor biosynthesis; NAD(+) biosynthesis; NAD(+) from deamido-NAD(+) (ammonia route): step 1/1. Catalyzes the ATP-dependent amidation of deamido-NAD to form NAD. Uses ammonia as a nitrogen source. The polypeptide is NH(3)-dependent NAD(+) synthetase (Pectobacterium carotovorum subsp. carotovorum (strain PC1)).